A 249-amino-acid chain; its full sequence is 5'-nucleotidase SurE (249 aa).

Residues aspartate 8, aspartate 9, serine 39, and asparagine 96 each contribute to the a divalent metal cation site.

This sequence belongs to the SurE nucleotidase family. A divalent metal cation serves as cofactor.

It is found in the cytoplasm. The catalysed reaction is a ribonucleoside 5'-phosphate + H2O = a ribonucleoside + phosphate. Its function is as follows. Nucleotidase that shows phosphatase activity on nucleoside 5'-monophosphates. This chain is 5'-nucleotidase SurE, found in Clostridium tetani (strain Massachusetts / E88).